Here is a 261-residue protein sequence, read N- to C-terminus: 1-(5-phosphoribosyl)-5-[(5-phosphoribosylamino)methylideneamino] imidazole-4-carboxamide isomerase (261 aa).

Aspartate 15 serves as the catalytic Proton acceptor. Catalysis depends on aspartate 136, which acts as the Proton donor.

This sequence belongs to the HisA/HisF family.

It is found in the cytoplasm. It catalyses the reaction 1-(5-phospho-beta-D-ribosyl)-5-[(5-phospho-beta-D-ribosylamino)methylideneamino]imidazole-4-carboxamide = 5-[(5-phospho-1-deoxy-D-ribulos-1-ylimino)methylamino]-1-(5-phospho-beta-D-ribosyl)imidazole-4-carboxamide. Its pathway is amino-acid biosynthesis; L-histidine biosynthesis; L-histidine from 5-phospho-alpha-D-ribose 1-diphosphate: step 4/9. The protein is 1-(5-phosphoribosyl)-5-[(5-phosphoribosylamino)methylideneamino] imidazole-4-carboxamide isomerase of Synechococcus sp. (strain JA-3-3Ab) (Cyanobacteria bacterium Yellowstone A-Prime).